A 380-amino-acid chain; its full sequence is Cytochrome b (380 aa).

The next 4 membrane-spanning stretches (helical) occupy residues 34 to 54 (FGSLLAMCLITQILTGLLLAM), 78 to 99 (WLIRNLHANGASFFFICIFLHI), 114 to 134 (WNTGVILLLTLMATAFVGYVL), and 179 to 199 (FFALHFLLPFLIAGITIIHLT). Positions 84 and 98 each coordinate heme b. Heme b-binding residues include H183 and H197. H202 lines the a ubiquinone pocket. 4 helical membrane-spanning segments follow: residues 227–247 (IKDILGLTLMLTPFLTLALFS), 289–309 (LGGVLALAASVLILLLIPFLH), 321–341 (LSQTLFWLLVANLLILTWIGS), and 348–368 (FIIIGQMASLSYFTILLILFP).

The protein belongs to the cytochrome b family. In terms of assembly, the cytochrome bc1 complex contains 11 subunits: 3 respiratory subunits (MT-CYB, CYC1 and UQCRFS1), 2 core proteins (UQCRC1 and UQCRC2) and 6 low-molecular weight proteins (UQCRH/QCR6, UQCRB/QCR7, UQCRQ/QCR8, UQCR10/QCR9, UQCR11/QCR10 and a cleavage product of UQCRFS1). This cytochrome bc1 complex then forms a dimer. It depends on heme b as a cofactor.

Its subcellular location is the mitochondrion inner membrane. Its function is as follows. Component of the ubiquinol-cytochrome c reductase complex (complex III or cytochrome b-c1 complex) that is part of the mitochondrial respiratory chain. The b-c1 complex mediates electron transfer from ubiquinol to cytochrome c. Contributes to the generation of a proton gradient across the mitochondrial membrane that is then used for ATP synthesis. The sequence is that of Cytochrome b (MT-CYB) from Coturnix japonica (Japanese quail).